A 70-amino-acid polypeptide reads, in one-letter code: Flexible pilin (70 aa).

The signal sequence occupies residues 1–24 (MPNFFRNGCIALVGSVAAMGAAHA).

As to quaternary structure, homomer.

It localises to the fimbrium. Fimbriae (also called pili) are polar filaments radiating from the surface of the bacterium to a length of 0.5-1.5 micrometers and numbering 100-300 per cell. They enable bacteria to colonize the epithelium of specific host organs. Flexible pili possess hemagglutinating function. This Aeromonas hydrophila protein is Flexible pilin (aerA).